The primary structure comprises 1049 residues: Protein phosphatase Slingshot homolog 1 (1049 aa).

Over residues 1–12 (MALVTLQRSPTP) the composition is skewed to polar residues. The tract at residues 1 to 28 (MALVTLQRSPTPSAASSSASNSELEAGS) is disordered. Alanine 2 is subject to N-acetylalanine. Residues 13-25 (SAASSSASNSELE) show a composition bias toward low complexity. Phosphoserine occurs at positions 37 and 57. Residues 249–304 (ERTERLIKAKLRSIMMSQDLENVTSKEIRNELEKQMNCNLKELKEFIDNEMLLILG) form the DEK-C domain. The Tyrosine-protein phosphatase domain maps to 308-449 (KPSLIFDHLY…LSEYEGILDA (142 aa)). Cysteine 393 (phosphocysteine intermediate) is an active-site residue. The interval 456–499 (KLWRQQTDSSLQQPVDDPAGPGDFLPETPDGTPESQLPFLDDAA) is disordered. The segment covering 458 to 468 (WRQQTDSSLQQ) has biased composition (polar residues). Serine 515 is subject to Phosphoserine. Disordered regions lie at residues 544-603 (AAPP…RWGQ), 693-787 (HLAS…KPAK), 825-899 (HTKE…KSPP), and 923-955 (PTSS…KQRT). Basic and acidic residues predominate over residues 564 to 573 (CEKDVKKKLE). Serine 576 carries the phosphoserine modification. Residues 731–742 (GAALEPPASLLE) are compositionally biased toward low complexity. The segment covering 772–787 (VIKEESSPKKDMKPAK) has biased composition (basic and acidic residues). At serine 897 the chain carries Phosphoserine. The interaction with YWHAG stretch occupies residues 897–1049 (SPPPFFYRLD…LKSPSWMSKS (153 aa)). The span at 925–943 (SSSMSSNLTRSSSSDSIHS) shows a compositional bias: low complexity. Serine 978 carries the post-translational modification Phosphoserine. A disordered region spans residues 989-1049 (TEDLSSEADP…LKSPSWMSKS (61 aa)). Polar residues predominate over residues 1001–1013 (VADSQDTTLSESS).

The protein belongs to the protein-tyrosine phosphatase family. As to quaternary structure, interacts with actin and this stimulates phosphatase activity. Also interacts with LIMK1 and with the 14-3-3 proteins YWHAB, YWHAG, YWHAQ, and YWHAZ. Interaction with 14-3-3 proteins inhibits phosphatase activity and also blocks recruitment to lamellipodia and stimulation by actin. In terms of processing, phosphorylated. Inhibitory phosphorylation by PAK4 promotes binding to YWHAZ. Phosphorylation at Ser-978 is decreased by stimuli which promote actin reorganization and lamellipodia formation. Can be dephosphorylated and activated by PPP3CA/calcineurin A. Phosphorylation decreases immediately prior to telophase.

It is found in the cytoplasm. The protein resides in the cytoskeleton. It localises to the cell projection. Its subcellular location is the lamellipodium. The protein localises to the cleavage furrow. It is found in the midbody. The enzyme catalyses O-phospho-L-tyrosyl-[protein] + H2O = L-tyrosyl-[protein] + phosphate. It catalyses the reaction O-phospho-L-seryl-[protein] + H2O = L-seryl-[protein] + phosphate. The catalysed reaction is O-phospho-L-threonyl-[protein] + H2O = L-threonyl-[protein] + phosphate. Its function is as follows. Protein phosphatase which regulates actin filament dynamics. Dephosphorylates and activates the actin binding/depolymerizing factor cofilin, which subsequently binds to actin filaments and stimulates their disassembly. Inhibitory phosphorylation of cofilin is mediated by LIMK1, which may also be dephosphorylated and inactivated by this protein. In Homo sapiens (Human), this protein is Protein phosphatase Slingshot homolog 1.